Here is a 319-residue protein sequence, read N- to C-terminus: ATP-dependent 6-phosphofructokinase (319 aa).

Gly11 serves as a coordination point for ATP. Residue 21 to 25 participates in ADP binding; sequence RAVVR. Residues 72–73 and 102–105 contribute to the ATP site; these read RC and GDGS. Residue Asp103 participates in Mg(2+) binding. 125–127 lines the substrate pocket; that stretch reads TID. The active-site Proton acceptor is the Asp127. Residue Arg154 participates in ADP binding. Substrate-binding positions include Arg162 and 169–171; that span reads MGR. Residues 185–187, Arg211, and 213–215 each bind ADP; these read GAE and KKH. Substrate-binding positions include Glu222, Arg243, and 249–252; that span reads HVQR.

This sequence belongs to the phosphofructokinase type A (PFKA) family. ATP-dependent PFK group I subfamily. Prokaryotic clade 'B1' sub-subfamily. In terms of assembly, homotetramer. Requires Mg(2+) as cofactor.

It localises to the cytoplasm. The enzyme catalyses beta-D-fructose 6-phosphate + ATP = beta-D-fructose 1,6-bisphosphate + ADP + H(+). Its pathway is carbohydrate degradation; glycolysis; D-glyceraldehyde 3-phosphate and glycerone phosphate from D-glucose: step 3/4. With respect to regulation, allosterically activated by ADP and other diphosphonucleosides, and allosterically inhibited by phosphoenolpyruvate. In terms of biological role, catalyzes the phosphorylation of D-fructose 6-phosphate to fructose 1,6-bisphosphate by ATP, the first committing step of glycolysis. The chain is ATP-dependent 6-phosphofructokinase from Geobacillus kaustophilus (strain HTA426).